Consider the following 325-residue polypeptide: Envelope protein H3 (325 aa).

Topologically, residues 1–285 are virion surface; sequence MATVNKTPVI…FTTPLISFFG (285 aa). Residues 286-306 traverse the membrane as a helical; Signal-anchor segment; that stretch reads LFDINVIGLIVILFIMFMLIF. The Intravirion segment spans residues 307–325; it reads NVKSKLLWFLTGTFVTAFI.

This sequence belongs to the orthopoxvirus OPG108 family. Post-translationally, does not contain disulfide bonds.

It is found in the virion membrane. Functionally, envelope protein that binds to heparan sulfate on the cell surface and might provide virion attachment to target cell. In Variola virus (isolate Human/India/Ind3/1967) (VARV), this protein is Envelope protein H3 (OPG108).